We begin with the raw amino-acid sequence, 264 residues long: Segregation and condensation protein A (264 aa).

This sequence belongs to the ScpA family. Component of a cohesin-like complex composed of ScpA, ScpB and the Smc homodimer, in which ScpA and ScpB bind to the head domain of Smc. The presence of the three proteins is required for the association of the complex with DNA.

Its subcellular location is the cytoplasm. Functionally, participates in chromosomal partition during cell division. May act via the formation of a condensin-like complex containing Smc and ScpB that pull DNA away from mid-cell into both cell halves. The protein is Segregation and condensation protein A of Enterococcus faecalis (strain ATCC 700802 / V583).